The following is a 299-amino-acid chain: Mitochondrial 2-oxodicarboxylate carrier (299 aa).

Solcar repeat units follow at residues 11–100 (REAS…YKKL), 107–196 (SPAL…VKNM), and 205–294 (LEFL…TYSW). The next 6 helical transmembrane spans lie at 17–37 (IVAGGSAGLVEICLMHPLDVV), 70–89 (FGFYKGILPPILAETPKRAV), 113–133 (TIAGLGSGLTEAIVVNPFEVV), 167–187 (GLNKGLTATLGRHGVFNMVYF), 205–225 (LEFLRKFGIGLLSGTIASVIN), and 277–297 (LGPGGAVMLLVYEYTYSWLQE).

It belongs to the mitochondrial carrier (TC 2.A.29) family.

The protein localises to the mitochondrion inner membrane. The catalysed reaction is 2-oxoadipate(in) + 2-oxoglutarate(out) = 2-oxoadipate(out) + 2-oxoglutarate(in). It catalyses the reaction hexanedioate(in) + 2-oxoglutarate(out) = hexanedioate(out) + 2-oxoglutarate(in). It carries out the reaction L-2-aminoadipate(in) + 2-oxoglutarate(out) = L-2-aminoadipate(out) + 2-oxoglutarate(in). The enzyme catalyses glutarate(in) + 2-oxoglutarate(out) = glutarate(out) + 2-oxoglutarate(in). The catalysed reaction is 2-oxoheptanedioate(in) + 2-oxoglutarate(out) = 2-oxoheptanedioate(out) + 2-oxoglutarate(in). It catalyses the reaction heptanedioate(in) + 2-oxoglutarate(out) = heptanedioate(out) + 2-oxoglutarate(in). It carries out the reaction citrate(in) + 2-oxoglutarate(out) = citrate(out) + 2-oxoglutarate(in). Transports dicarboxylates across the inner membranes of mitochondria by a counter-exchange mechanism. Can transport 2-oxoadipate (2-oxohexanedioate), 2-oxoglutarate, adipate (hexanedioate), glutarate, and to a lesser extent, pimelate (heptanedioate), 2-oxopimelate (2-oxoheptanedioate), 2-aminoadipate (2-aminohexanedioate), oxaloacetate, and citrate. Plays a central role in catabolism of lysine, hydroxylysine, and tryptophan, by transporting common metabolite intermediates (such as 2-oxoadipate) into the mitochondria, where it is converted into acetyl-CoA and can enter the citric acid (TCA) cycle. The sequence is that of Mitochondrial 2-oxodicarboxylate carrier (SLC25A21) from Pongo abelii (Sumatran orangutan).